We begin with the raw amino-acid sequence, 344 residues long: N-acetyl-gamma-glutamyl-phosphate reductase (344 aa).

Cysteine 148 is a catalytic residue.

This sequence belongs to the NAGSA dehydrogenase family. Type 1 subfamily.

The protein resides in the cytoplasm. It carries out the reaction N-acetyl-L-glutamate 5-semialdehyde + phosphate + NADP(+) = N-acetyl-L-glutamyl 5-phosphate + NADPH + H(+). It participates in amino-acid biosynthesis; L-arginine biosynthesis; N(2)-acetyl-L-ornithine from L-glutamate: step 3/4. Its function is as follows. Catalyzes the NADPH-dependent reduction of N-acetyl-5-glutamyl phosphate to yield N-acetyl-L-glutamate 5-semialdehyde. The sequence is that of N-acetyl-gamma-glutamyl-phosphate reductase from Clostridium botulinum (strain Eklund 17B / Type B).